The sequence spans 284 residues: RCS-specific HTH-type transcriptional activator RclR (284 aa).

The cysteines at positions 21 and 89 are disulfide-linked. The 102-residue stretch at 177 to 278 folds into the HTH araC/xylS-type domain; sequence PRLGAVIQQM…GCTPGEYRER (102 aa). 2 consecutive DNA-binding regions (H-T-H motif) follow at residues 197 to 218 and 245 to 268; these read ESLA…RDVS and VVVI…VREF.

With respect to regulation, oxydation of Cys-21 leads to partial activation of RclR, followed by the formation of an intramolecular disulfide bond between Cys-21 and Cys-89, which stabilizes the active form of RclR. Involved in reactive chlorine species (RCS) stress resistance. Up-regulates, in response to hypochlorous acid (HOCl), the expression of three genes essential for survival of RCS stress (rclA, rclB and rclC) and its own expression. In Escherichia coli (strain K12), this protein is RCS-specific HTH-type transcriptional activator RclR (rclR).